A 768-amino-acid chain; its full sequence is Probable beta-glucosidase M (768 aa).

Positions 1-19 are cleaved as a signal peptide; that stretch reads MHAIAGLTGFLAGVSLSYA. N-linked (GlcNAc...) asparagine glycans are attached at residues Asn-25, Asn-72, and Asn-259. The active site involves Asp-287. N-linked (GlcNAc...) asparagine glycosylation is found at Asn-315, Asn-322, Asn-394, Asn-434, Asn-472, Asn-543, and Asn-651.

It belongs to the glycosyl hydrolase 3 family.

Its subcellular location is the secreted. The catalysed reaction is Hydrolysis of terminal, non-reducing beta-D-glucosyl residues with release of beta-D-glucose.. The protein operates within glycan metabolism; cellulose degradation. In terms of biological role, beta-glucosidases are one of a number of cellulolytic enzymes involved in the degradation of cellulosic biomass. Catalyzes the last step releasing glucose from the inhibitory cellobiose. In Aspergillus flavus (strain ATCC 200026 / FGSC A1120 / IAM 13836 / NRRL 3357 / JCM 12722 / SRRC 167), this protein is Probable beta-glucosidase M (bglM).